The chain runs to 87 residues: Apoptosis inducing factor BLCAP B (87 aa).

2 helical membrane passes run 19 to 39 (PALW…FLLE) and 43 to 63 (CTIC…SCWG).

The protein belongs to the BLCAP family.

The protein localises to the cytoplasm. It localises to the nucleus. It is found in the membrane. Acts as a tumor suppressor; induces growth arrest at G(1)/S checkpoint and apoptosis via RB1-dependent and p53/TP53- and NF-kappa-B-independent mechanisms. Modulates expression of genes involved in the regulation of proliferation, cell cycle and apoptosis. This Xenopus laevis (African clawed frog) protein is Apoptosis inducing factor BLCAP B (blcap-b).